Here is a 280-residue protein sequence, read N- to C-terminus: MMPLGLFPLPRAAVVLLISLLTLPAQAAERVISLSPSTTELAYAAGLGDKLVAVSAYSDYPESAKKLEHVASWQGINVERILALKPDLILAWRGGNPQRPLDQLAALGIPIFYSDPTHIDQIASDLDKLAQYSPHPEQAHQAAEQFRQHVNTLRDRYARSQPKRTFLQFGTQPLFTSSGHTLQSEVVSLCGGENIFADSRVPWPQVSREQVMTRKPQVIVVSGTQSQVDNVSAFWLPQLVVPVIALNEDWFNRASPRILLAAQQLCQQMASIPTPVAESH.

An N-terminal signal peptide occupies residues 1 to 27 (MMPLGLFPLPRAAVVLLISLLTLPAQA). Positions 30-277 (RVISLSPSTT…QMASIPTPVA (248 aa)) constitute a Fe/B12 periplasmic-binding domain. Tyr57 contributes to the cyanocob(III)alamin binding site. Residues Cys190 and Cys266 are joined by a disulfide bond.

This sequence belongs to the BtuF family. In terms of assembly, the complex is composed of two ATP-binding proteins (BtuD), two transmembrane proteins (BtuC) and a solute-binding protein (BtuF).

The protein localises to the periplasm. Its function is as follows. Part of the ABC transporter complex BtuCDF involved in vitamin B12 import. Binds vitamin B12 and delivers it to the periplasmic surface of BtuC. This chain is Vitamin B12-binding protein, found in Yersinia pseudotuberculosis serotype O:1b (strain IP 31758).